Reading from the N-terminus, the 1074-residue chain is Phospholipase D1 (1074 aa).

Residues 81–212 form the PX domain; sequence VKAQVLEVER…TEFLDVSQLS (132 aa). The 110-residue stretch at 219–328 folds into the PH domain; it reads PKGLEGMIMK…WGGAIEEFIQ (110 aa). 2 S-palmitoyl cysteine lipidation sites follow: Cys-240 and Cys-241. Residues 459 to 486 enclose the PLD phosphodiesterase 1 domain; it reads YLWAHHEKLVIIDQSVAFVGGIDLAYGR. The interval 463–928 is catalytic; sequence HHEKLVIIDQ…MLGKRDSEMA (466 aa). Ser-499, Ser-561, and Ser-629 each carry phosphoserine. Residues 891-918 form the PLD phosphodiesterase 2 domain; the sequence is ELIYVHSKLLIADDNTVIIGSANINDRS.

The protein belongs to the phospholipase D family. As to quaternary structure, interacts with PIP5K1B. Post-translationally, phosphorylated on serine and threonine residues. It is uncertain whether palmitoylation is on Cys-240 and/or Cys-241. Palmitoylation is required prior to phosphorylation.

Its subcellular location is the cytoplasm. It localises to the perinuclear region. The protein localises to the endoplasmic reticulum membrane. The protein resides in the golgi apparatus membrane. It is found in the late endosome membrane. The enzyme catalyses a 1,2-diacyl-sn-glycero-3-phosphocholine + H2O = a 1,2-diacyl-sn-glycero-3-phosphate + choline + H(+). The catalysed reaction is ethanol + a 1,2-diacyl-sn-glycero-3-phosphocholine = 1,2-diacyl-sn-glycero-3-phosphoethanol + choline. It catalyses the reaction 1,2-dihexadecanoyl-sn-glycero-3-phosphocholine + H2O = 1,2-dihexadecanoyl-sn-glycero-3-phosphate + choline + H(+). Its activity is regulated as follows. Stimulated by phosphatidylinositol 4,5-bisphosphate and phosphatidylinositol 3,4,5-trisphosphate, activated by the phosphokinase C-alpha, by the ADP-ribosylation factor-1 (ARF-1), and to a lesser extent by GTP-binding proteins: RHO A, RAC-1 and CDC42. Inhibited by oleate. In terms of biological role, function as phospholipase selective for phosphatidylcholine. Implicated as a critical step in numerous cellular pathways, including signal transduction, membrane trafficking, and the regulation of mitosis. May be involved in the regulation of perinuclear intravesicular membrane traffic. This chain is Phospholipase D1, found in Rattus norvegicus (Rat).